Reading from the N-terminus, the 327-residue chain is Urokinase plasminogen activator surface receptor (327 aa).

The N-terminal stretch at Met1–Gly23 is a signal peptide. UPAR/Ly6 domains follow at residues Leu24–Leu117, Leu117–Gly212, and Phe213–Gly298. Disulfide bonds link Cys26-Cys47, Cys29-Cys35, and Cys40-Cys68. Asn32 carries N-linked (GlcNAc...) asparagine glycosylation. N-linked (GlcNAc...) asparagine glycosylation is present at Asn75. 11 disulfide bridges follow: Cys94–Cys99, Cys119–Cys146, Cys122–Cys129, Cys139–Cys168, Cys174–Cys191, Cys192–Cys197, Cys215–Cys243, Cys218–Cys226, Cys236–Cys262, Cys268–Cys287, and Cys288–Cys293. Residues Asn183, Asn193, Asn221, Asn254, and Asn282 are each glycosylated (N-linked (GlcNAc...) asparagine). A lipid anchor (GPI-anchor amidated glycine) is attached at Gly298. A propeptide spans Gly299–Thr327 (removed in mature form).

As to quaternary structure, monomer. Interacts (via the UPAR/Ly6 domains) with SRPX2. Interacts with MRC2. Interacts with SORL1 (via N-terminal ectodomain); this interaction decreases PLAUR internalization. The ternary complex composed of PLAUR-PLAU-SERPINE1 also interacts with SORL1. Interacts with CD82; this interaction prevents PLAUR from binding to its high affinity ligand PLAU. As to expression, expressed in angiogenic endothelial cells (at protein level).

It is found in the cell membrane. The protein resides in the secreted. Functionally, acts as a receptor for urokinase plasminogen activator. Plays a role in localizing and promoting plasmin formation. Mediates the proteolysis-independent signal transduction activation effects of U-PA. The polypeptide is Urokinase plasminogen activator surface receptor (Plaur) (Mus musculus (Mouse)).